The following is a 260-amino-acid chain: MSLRIKIDKLRQLVTYFSEFSEEVSINIDVKSNVLYIFATLGGSINIWTIVPLNSNVFYNGVENTVFNLPVLKVKNCLCSFHNDAVVSITADHDNNTVTLSSHYTVSIDCNNEQIPHSTGTSISLGIDQKKSYIFNFHKYEEKCCGRTVFHLDMLLGFIKCISQYQYLNICFDDKKLLLKTPGTRDTFVRSYSMTEWSPTLQNYSFKIAIFSLNKLRGFKKRVLVFESKIVMDTEGNILGLLFRDRIGTYKVNVFMAFQD.

Belongs to the chordopoxvirinae VLTF-1 family. Interacts with the late transcription factors VLTF-2 and VLTF-3. Interacts with the late transcription elongation factor H5/VLTF-4. Interacts with itself.

Associates with RNA polymerase to initiate transcription from late gene promoters. In Vertebrata (FPV), this protein is Late transcription factor 1 (VLTF1).